The following is a 347-amino-acid chain: DNA-directed RNA polymerase subunit alpha (347 aa).

The alpha N-terminal domain (alpha-NTD) stretch occupies residues 1-226 (MLISQRPTLS…ELFGLARELN (226 aa)). Residues 241 to 347 (ADHIASFALP…DQDYAETEQL (107 aa)) form an alpha C-terminal domain (alpha-CTD) region.

It belongs to the RNA polymerase alpha chain family. In terms of assembly, homodimer. The RNAP catalytic core consists of 2 alpha, 1 beta, 1 beta' and 1 omega subunit. When a sigma factor is associated with the core the holoenzyme is formed, which can initiate transcription.

It carries out the reaction RNA(n) + a ribonucleoside 5'-triphosphate = RNA(n+1) + diphosphate. Functionally, DNA-dependent RNA polymerase catalyzes the transcription of DNA into RNA using the four ribonucleoside triphosphates as substrates. In Mycobacterium ulcerans (strain Agy99), this protein is DNA-directed RNA polymerase subunit alpha.